Consider the following 267-residue polypeptide: Tryptophan synthase alpha chain (267 aa).

Catalysis depends on proton acceptor residues Glu49 and Asp60.

Belongs to the TrpA family. As to quaternary structure, tetramer of two alpha and two beta chains.

The enzyme catalyses (1S,2R)-1-C-(indol-3-yl)glycerol 3-phosphate + L-serine = D-glyceraldehyde 3-phosphate + L-tryptophan + H2O. It participates in amino-acid biosynthesis; L-tryptophan biosynthesis; L-tryptophan from chorismate: step 5/5. Functionally, the alpha subunit is responsible for the aldol cleavage of indoleglycerol phosphate to indole and glyceraldehyde 3-phosphate. The chain is Tryptophan synthase alpha chain from Geobacter sp. (strain M21).